A 538-amino-acid polypeptide reads, in one-letter code: Putative cysteine ligase BshC (538 aa).

Residues 421 to 485 (VEEKFQEAKK…LERRHEVELN (65 aa)) are a coiled coil.

Belongs to the BshC family.

Involved in bacillithiol (BSH) biosynthesis. May catalyze the last step of the pathway, the addition of cysteine to glucosamine malate (GlcN-Mal) to generate BSH. The protein is Putative cysteine ligase BshC of Bacillus cytotoxicus (strain DSM 22905 / CIP 110041 / 391-98 / NVH 391-98).